We begin with the raw amino-acid sequence, 208 residues long: N-(5'-phosphoribosyl)anthranilate isomerase (208 aa).

Belongs to the TrpF family.

The catalysed reaction is N-(5-phospho-beta-D-ribosyl)anthranilate = 1-(2-carboxyphenylamino)-1-deoxy-D-ribulose 5-phosphate. It participates in amino-acid biosynthesis; L-tryptophan biosynthesis; L-tryptophan from chorismate: step 3/5. This Dechloromonas aromatica (strain RCB) protein is N-(5'-phosphoribosyl)anthranilate isomerase.